A 277-amino-acid polypeptide reads, in one-letter code: UBX domain-containing protein 8 (277 aa).

Position 1 (methionine 1) is a topological domain, cytoplasmic. The chain crosses the membrane as a helical span at residues 2-22 (ASRGVVGLFLLSALPLLCLEL). At 23 to 33 (RRGIPSLGIKD) the chain is on the lumenal side. The chain crosses the membrane as a helical span at residues 34 to 54 (LILLSGRIFLLLALLTLVISV). The Cytoplasmic segment spans residues 55-277 (TTSWFNSLKP…NVEEKEQSSQ (223 aa)). The tract at residues 64–89 (PSQGHLKEGEKENEKRRRLVRERQQE) is disordered. Basic and acidic residues predominate over residues 68 to 89 (HLKEGEKENEKRRRLVRERQQE). Residues 193–269 (TAEEVVTVAL…GITVDTVLNV (77 aa)) form the UBX domain.

As to quaternary structure, interacts with SYVN1 and VCP. In terms of tissue distribution, highly expressed in gonads. In testis, expressed in post-meiotic round spermatids, while in ovaries it is expressed in granulosa cells.

The protein resides in the endoplasmic reticulum membrane. Functionally, involved in endoplasmic reticulum-associated degradation (ERAD) for misfolded lumenal proteins, possibly by tethering VCP to the endoplasmic reticulum membrane. May play a role in reproduction. This chain is UBX domain-containing protein 8 (Ubxn8), found in Mus musculus (Mouse).